The primary structure comprises 296 residues: Probable GTP 3',8-cyclase (296 aa).

A Radical SAM core domain is found at 5–230 (EYGRVVTNLR…HRRTQYFTPK (226 aa)). A GTP-binding site is contributed by arginine 14. The [4Fe-4S] cluster site is built by cysteine 21 and cysteine 25. Position 27 (tyrosine 27) interacts with S-adenosyl-L-methionine. Residue cysteine 28 participates in [4Fe-4S] cluster binding. Lysine 61 lines the GTP pocket. Residue glycine 65 participates in S-adenosyl-L-methionine binding. A GTP-binding site is contributed by threonine 89. Serine 113 serves as a coordination point for S-adenosyl-L-methionine. Lysine 150 contributes to the GTP binding site. Cysteine 245 and cysteine 248 together coordinate [4Fe-4S] cluster. 250 to 252 (RMR) lines the GTP pocket. [4Fe-4S] cluster is bound at residue cysteine 262.

This sequence belongs to the radical SAM superfamily. MoaA family. Requires [4Fe-4S] cluster as cofactor.

It carries out the reaction GTP + AH2 + S-adenosyl-L-methionine = (8S)-3',8-cyclo-7,8-dihydroguanosine 5'-triphosphate + 5'-deoxyadenosine + L-methionine + A + H(+). The protein operates within cofactor biosynthesis; molybdopterin biosynthesis. Catalyzes the cyclization of GTP to (8S)-3',8-cyclo-7,8-dihydroguanosine 5'-triphosphate. In Archaeoglobus fulgidus (strain ATCC 49558 / DSM 4304 / JCM 9628 / NBRC 100126 / VC-16), this protein is Probable GTP 3',8-cyclase.